A 210-amino-acid polypeptide reads, in one-letter code: Na(+)-translocating NADH-quinone reductase subunit D (210 aa).

Helical transmembrane passes span 42 to 62 (FVMT…ISLI), 72 to 92 (IIAQ…VLKA), 103 to 123 (VFVG…AYAM), 131 to 151 (FLDG…VATV), and 178 to 198 (NGLL…IWGV).

It belongs to the NqrDE/RnfAE family. Composed of six subunits; NqrA, NqrB, NqrC, NqrD, NqrE and NqrF.

It localises to the cell inner membrane. The catalysed reaction is a ubiquinone + n Na(+)(in) + NADH + H(+) = a ubiquinol + n Na(+)(out) + NAD(+). NQR complex catalyzes the reduction of ubiquinone-1 to ubiquinol by two successive reactions, coupled with the transport of Na(+) ions from the cytoplasm to the periplasm. NqrA to NqrE are probably involved in the second step, the conversion of ubisemiquinone to ubiquinol. The polypeptide is Na(+)-translocating NADH-quinone reductase subunit D (Aeromonas hydrophila subsp. hydrophila (strain ATCC 7966 / DSM 30187 / BCRC 13018 / CCUG 14551 / JCM 1027 / KCTC 2358 / NCIMB 9240 / NCTC 8049)).